Consider the following 565-residue polypeptide: NAD-dependent malic enzyme (565 aa).

Residue Y104 is the Proton donor of the active site. R157 is a binding site for NAD(+). K175 acts as the Proton acceptor in catalysis. A divalent metal cation is bound by residues E246, D247, and D270. Residues D270 and N418 each coordinate NAD(+).

This sequence belongs to the malic enzymes family. Homotetramer. It depends on Mg(2+) as a cofactor. The cofactor is Mn(2+).

The enzyme catalyses (S)-malate + NAD(+) = pyruvate + CO2 + NADH. The catalysed reaction is oxaloacetate + H(+) = pyruvate + CO2. This is NAD-dependent malic enzyme from Escherichia coli (strain K12 / MC4100 / BW2952).